A 56-amino-acid chain; its full sequence is UPF0391 membrane protein PSHAa0537 (56 aa).

Helical transmembrane passes span 6–26 (ITFLVIALIAAVLGFGGIAGA) and 27–47 (AAGIAKIIFFIFLILLVISLV).

This sequence belongs to the UPF0391 family.

It is found in the cell membrane. This chain is UPF0391 membrane protein PSHAa0537, found in Pseudoalteromonas translucida (strain TAC 125).